Consider the following 308-residue polypeptide: MGEVKVSPDYNWFRGTVPLKKIIVDDDDSKIWSLYDAGPRSIRCPLIFLPPVSGTADVFFRQILALTGWGYRVIALQYPVYWDHLEFCDGFRKLLDHLQLDKVHLFGASLGGFLAQKFAEYTHKSPRVHSLILCNSFSDTSIFNQTWTANSFWLMPAFMLKKIVLGNFSSGPVDPMMADAIDFMVDRLESLGQSELASRLTLNCQNSYVEPHKIRDIPVTIMDVFDQSALSTEAKEEMYKLYPNARRAHLKTGGNFPYLCRSAEVNLYVQIHLLQFHGTKYAAIDPSMVSAEELEVQKGSLGINQEEQ.

An AB hydrolase-1 domain is found at 87–159 (FCDGFRKLLD…NSFWLMPAFM (73 aa)).

This sequence belongs to the AB hydrolase superfamily. In terms of assembly, interacts with CD4. Interacts with ALDH16A1.

It localises to the cytoplasm. Functionally, may play a role as a negative regulatory factor in CD4-dependent T-cell activation. The protein is Maspardin (SPG21) of Macaca fascicularis (Crab-eating macaque).